A 59-amino-acid polypeptide reads, in one-letter code: MKKMKVTQFKSGAHRLKSHKASLKGLGLRRINHTVIVEDTPSTRGMVNRVNYLVKVEEA.

The protein belongs to the universal ribosomal protein uL30 family. In terms of assembly, part of the 50S ribosomal subunit.

The protein is Large ribosomal subunit protein uL30 of Psychrobacter arcticus (strain DSM 17307 / VKM B-2377 / 273-4).